A 390-amino-acid polypeptide reads, in one-letter code: Cold-responsive protein kinase 1 (390 aa).

The 280-residue stretch at 41–320 folds into the Protein kinase domain; the sequence is FSAENKIGEG…VRLLTGEKDI (280 aa). Residues 47-55 and lysine 69 contribute to the ATP site; that span reads IGEGGFGSV. The residue at position 114 (tyrosine 114) is a Phosphotyrosine. Catalysis depends on aspartate 169, which acts as the Proton acceptor. A phosphoserine mark is found at serine 173 and serine 202. Residues threonine 203 and threonine 208 each carry the phosphothreonine modification. At tyrosine 216 the chain carries Phosphotyrosine. Positions 345–390 are disordered; the sequence is TKTEQVNRQNYTNPSSSSNGSSRDHSNAYSSGASSANAGNTFSSTI. Residues 354–390 are compositionally biased toward low complexity; it reads NYTNPSSSSNGSSRDHSNAYSSGASSANAGNTFSSTI.

This sequence belongs to the protein kinase superfamily. Ser/Thr protein kinase family. As to quaternary structure, interacts with and phosphorylates 14-3-3 proteins. Binds to GRF6 at the plasma membrane. In terms of processing, autophosphorylated.

It is found in the cell membrane. The catalysed reaction is L-seryl-[protein] + ATP = O-phospho-L-seryl-[protein] + ADP + H(+). It catalyses the reaction L-threonyl-[protein] + ATP = O-phospho-L-threonyl-[protein] + ADP + H(+). With respect to regulation, activated by cold. Functionally, negative regulator of freezing tolerance that phosphorylates 14-3-3 proteins (e.g. GRF6) thus triggering their translocation from the cytosol to the nucleus in response to cold stress. The sequence is that of Cold-responsive protein kinase 1 from Arabidopsis thaliana (Mouse-ear cress).